The sequence spans 93 residues: Small ribosomal subunit protein uS19 (93 aa).

Belongs to the universal ribosomal protein uS19 family.

In terms of biological role, protein S19 forms a complex with S13 that binds strongly to the 16S ribosomal RNA. The sequence is that of Small ribosomal subunit protein uS19 from Dehalococcoides mccartyi (strain ATCC BAA-2266 / KCTC 15142 / 195) (Dehalococcoides ethenogenes (strain 195)).